A 358-amino-acid chain; its full sequence is Biotin synthase (358 aa).

Positions 47–306 (KNNSKIKLCA…ALYKIIMPYA (260 aa)) constitute a Radical SAM core domain. Residues Cys-65, Cys-69, and Cys-72 each coordinate [4Fe-4S] cluster. 4 residues coordinate [2Fe-2S] cluster: Ser-142, Cys-174, Cys-233, and Arg-309.

This sequence belongs to the radical SAM superfamily. Biotin synthase family. In terms of assembly, homodimer. [4Fe-4S] cluster is required as a cofactor. [2Fe-2S] cluster serves as cofactor.

The enzyme catalyses (4R,5S)-dethiobiotin + (sulfur carrier)-SH + 2 reduced [2Fe-2S]-[ferredoxin] + 2 S-adenosyl-L-methionine = (sulfur carrier)-H + biotin + 2 5'-deoxyadenosine + 2 L-methionine + 2 oxidized [2Fe-2S]-[ferredoxin]. It participates in cofactor biosynthesis; biotin biosynthesis; biotin from 7,8-diaminononanoate: step 2/2. Catalyzes the conversion of dethiobiotin (DTB) to biotin by the insertion of a sulfur atom into dethiobiotin via a radical-based mechanism. This Methanocaldococcus jannaschii (strain ATCC 43067 / DSM 2661 / JAL-1 / JCM 10045 / NBRC 100440) (Methanococcus jannaschii) protein is Biotin synthase.